A 323-amino-acid chain; its full sequence is Acetyl-coenzyme A carboxylase carboxyl transferase subunit alpha (323 aa).

The CoA carboxyltransferase C-terminal domain maps to 39–293; it reads RLAGKSQQLT…KRSLAESLRQ (255 aa).

Belongs to the AccA family. Acetyl-CoA carboxylase is a heterohexamer composed of biotin carboxyl carrier protein (AccB), biotin carboxylase (AccC) and two subunits each of ACCase subunit alpha (AccA) and ACCase subunit beta (AccD).

It localises to the cytoplasm. It carries out the reaction N(6)-carboxybiotinyl-L-lysyl-[protein] + acetyl-CoA = N(6)-biotinyl-L-lysyl-[protein] + malonyl-CoA. It functions in the pathway lipid metabolism; malonyl-CoA biosynthesis; malonyl-CoA from acetyl-CoA: step 1/1. In terms of biological role, component of the acetyl coenzyme A carboxylase (ACC) complex. First, biotin carboxylase catalyzes the carboxylation of biotin on its carrier protein (BCCP) and then the CO(2) group is transferred by the carboxyltransferase to acetyl-CoA to form malonyl-CoA. This chain is Acetyl-coenzyme A carboxylase carboxyl transferase subunit alpha, found in Cupriavidus metallidurans (strain ATCC 43123 / DSM 2839 / NBRC 102507 / CH34) (Ralstonia metallidurans).